We begin with the raw amino-acid sequence, 699 residues long: Long-chain-fatty-acid--CoA ligase 1 (699 aa).

Residue Met1 is modified to N-acetylmethionine. Position 9 is a 3'-nitrotyrosine (Tyr9). Residues 25–45 form a helical; Signal-anchor for type III membrane protein membrane-spanning segment; the sequence is LPTNTLMGFGAFAALTTFWYA. Topologically, residues 46–699 are cytoplasmic; the sequence is TRPKALKPPC…IDELYATIKI (654 aa). At Tyr85 the chain carries Phosphotyrosine. At Tyr86 the chain carries 3'-nitrotyrosine. Ser136 carries O-linked (GlcNAc) serine glycosylation. Lys208, Lys357, and Lys387 each carry N6-acetyllysine. A Phosphoserine modification is found at Ser621. The residue at position 633 (Lys633) is an N6-acetyllysine.

This sequence belongs to the ATP-dependent AMP-binding enzyme family. Mg(2+) serves as cofactor.

The protein resides in the mitochondrion outer membrane. Its subcellular location is the peroxisome membrane. It localises to the microsome membrane. It is found in the endoplasmic reticulum membrane. The catalysed reaction is a long-chain fatty acid + ATP + CoA = a long-chain fatty acyl-CoA + AMP + diphosphate. It catalyses the reaction (5Z,8Z,11Z,14Z)-eicosatetraenoate + ATP + CoA = (5Z,8Z,11Z,14Z)-eicosatetraenoyl-CoA + AMP + diphosphate. It carries out the reaction 3,7,11,15-tetramethylhexadecanoate + ATP + CoA = phytanoyl-CoA + AMP + diphosphate. The enzyme catalyses hexadecanoate + ATP + CoA = hexadecanoyl-CoA + AMP + diphosphate. The catalysed reaction is (E)-hexadec-2-enoate + ATP + CoA = (2E)-hexadecenoyl-CoA + AMP + diphosphate. It catalyses the reaction 2,6,10,14-tetramethylpentadecanoate + ATP + CoA = pristanoyl-CoA + AMP + diphosphate. It carries out the reaction 14,15-epoxy-(5Z,8Z,11Z)-eicosatrienoate + ATP + CoA = 14,15-epoxy-(5Z,8Z,11Z)-eicosatrienoyl-CoA + AMP + diphosphate. The enzyme catalyses 5-hydroxy-(6E,8Z,11Z,14Z)-eicosatetraenoate + ATP + CoA = 5-hydroxy-(6E,8Z,11Z,14Z)-eicosatetraenoyl-CoA + AMP + diphosphate. The catalysed reaction is 12-hydroxy-(5Z,8Z,10E,14Z)-eicosatetraenoate + ATP + CoA = 12-hydroxy-(5Z,8Z,10E,14Z)-eicosatetraenoyl-CoA + AMP + diphosphate. It catalyses the reaction 15-hydroxy-(5Z,8Z,11Z,13E)-eicosatetraenoate + ATP + CoA = 15-hydroxy-(5Z,8Z,11Z,13E)-eicosatetraenoyl-CoA + AMP + diphosphate. It carries out the reaction (9Z)-octadecenoate + ATP + CoA = (9Z)-octadecenoyl-CoA + AMP + diphosphate. Inhibited at high temperature and by arachidonate. In terms of biological role, catalyzes the conversion of long-chain fatty acids to their active form acyl-CoAs for both synthesis of cellular lipids, and degradation via beta-oxidation. Preferentially uses palmitoleate, oleate and linoleate. Preferentially activates arachidonate than epoxyeicosatrienoic acids (EETs) or hydroxyeicosatrienoic acids (HETEs). The protein is Long-chain-fatty-acid--CoA ligase 1 of Mus musculus (Mouse).